An 898-amino-acid polypeptide reads, in one-letter code: Phosphoenolpyruvate carboxylase (898 aa).

Residues H138 and K561 contribute to the active site.

Belongs to the PEPCase type 1 family. Requires Mg(2+) as cofactor.

It carries out the reaction oxaloacetate + phosphate = phosphoenolpyruvate + hydrogencarbonate. Forms oxaloacetate, a four-carbon dicarboxylic acid source for the tricarboxylic acid cycle. This is Phosphoenolpyruvate carboxylase from Streptococcus pneumoniae serotype 4 (strain ATCC BAA-334 / TIGR4).